The chain runs to 338 residues: Holliday junction branch migration complex subunit RuvB (338 aa).

Residues 1-22 (MVDDERVVSPETADDHEDSVEK) form a disordered region. A large ATPase domain (RuvB-L) region spans residues 4–185 (DERVVSPETA…FGIVEHMAYY (182 aa)). Residues Leu24, Arg25, Gly66, Lys69, Thr70, Thr71, 132 to 134 (EDF), Arg175, Tyr185, and Arg222 contribute to the ATP site. Thr70 is a Mg(2+) binding site. The tract at residues 186-257 (ETTDLQEIVL…IVDHALDLLR (72 aa)) is small ATPAse domain (RuvB-S). The interval 260-338 (SAGLDATDIK…HLGRTMPDNN (79 aa)) is head domain (RuvB-H). 2 residues coordinate DNA: Arg315 and Arg320.

This sequence belongs to the RuvB family. As to quaternary structure, homohexamer. Forms an RuvA(8)-RuvB(12)-Holliday junction (HJ) complex. HJ DNA is sandwiched between 2 RuvA tetramers; dsDNA enters through RuvA and exits via RuvB. An RuvB hexamer assembles on each DNA strand where it exits the tetramer. Each RuvB hexamer is contacted by two RuvA subunits (via domain III) on 2 adjacent RuvB subunits; this complex drives branch migration. In the full resolvosome a probable DNA-RuvA(4)-RuvB(12)-RuvC(2) complex forms which resolves the HJ.

It is found in the cytoplasm. The catalysed reaction is ATP + H2O = ADP + phosphate + H(+). The RuvA-RuvB-RuvC complex processes Holliday junction (HJ) DNA during genetic recombination and DNA repair, while the RuvA-RuvB complex plays an important role in the rescue of blocked DNA replication forks via replication fork reversal (RFR). RuvA specifically binds to HJ cruciform DNA, conferring on it an open structure. The RuvB hexamer acts as an ATP-dependent pump, pulling dsDNA into and through the RuvAB complex. RuvB forms 2 homohexamers on either side of HJ DNA bound by 1 or 2 RuvA tetramers; 4 subunits per hexamer contact DNA at a time. Coordinated motions by a converter formed by DNA-disengaged RuvB subunits stimulates ATP hydrolysis and nucleotide exchange. Immobilization of the converter enables RuvB to convert the ATP-contained energy into a lever motion, pulling 2 nucleotides of DNA out of the RuvA tetramer per ATP hydrolyzed, thus driving DNA branch migration. The RuvB motors rotate together with the DNA substrate, which together with the progressing nucleotide cycle form the mechanistic basis for DNA recombination by continuous HJ branch migration. Branch migration allows RuvC to scan DNA until it finds its consensus sequence, where it cleaves and resolves cruciform DNA. This is Holliday junction branch migration complex subunit RuvB from Levilactobacillus brevis (strain ATCC 367 / BCRC 12310 / CIP 105137 / JCM 1170 / LMG 11437 / NCIMB 947 / NCTC 947) (Lactobacillus brevis).